The following is a 457-amino-acid chain: Tryptophan aminotransferase-related protein 3 (457 aa).

A helical membrane pass occupies residues 6 to 26 (LLIAGSIILNLVFTIHILYNN). Pyridoxal 5'-phosphate contacts are provided by residues tyrosine 123, 163-164 (AT), asparagine 237, 257-260 (DYAY), 280-283 (SLSK), and arginine 291. An N6-(pyridoxal phosphate)lysine modification is found at lysine 283.

It belongs to the alliinase family. Pyridoxal 5'-phosphate serves as cofactor.

It is found in the membrane. Functionally, probable aminotransferase. The polypeptide is Tryptophan aminotransferase-related protein 3 (TAR3) (Arabidopsis thaliana (Mouse-ear cress)).